The chain runs to 663 residues: Protein associated with UVRAG as autophagy enhancer (663 aa).

Disordered stretches follow at residues 1–36 (MVSQ…LDTE) and 65–136 (DASP…EERA). Composition is skewed to polar residues over residues 80–93 (TASN…TSPL) and 105–130 (PKGT…SSVT). An interaction with UVRAG region spans residues 196-235 (EAFVLPVDAEKENAHFYVADMIISVMEKMKCNILSQQHTE). Residues Lys484, Lys534, Lys574, and Lys634 each carry the N6-acetyllysine modification.

As to quaternary structure, interacts with UVRAG; the interaction is direct and promotes association with the PI3K/PI3KC3 and HOPS complexes. Interacts with STX17. In terms of processing, acetylated by KAT5/TIP60 under autophagy induction, promoting autophagosome maturation and lipid metabolism. Lys-484 and Lys-574 constitute the key sites for tuning function in autophagy.

It is found in the cytoplasmic vesicle. The protein resides in the autophagosome membrane. Regulator of autophagy that promotes autophagosome maturation by facilitating the biogenesis of phosphatidylinositol 3-phosphate (PtdIns(3)P) in late steps of autophagy. Acts by antagonizing RUBCN, thereby stimulating phosphatidylinositol 3-kinase activity of the PI3K/PI3KC3 complex. Following anchorage to the autophagosomal SNARE STX17, promotes the recruitment of PI3K/PI3KC3 and HOPS complexes to the autophagosome to regulate the fusion specificity of autophagosomes with late endosomes/lysosomes. Binds phosphoinositides phosphatidylinositol 3-phosphate (PtdIns(3)P), 4-phosphate (PtdIns(4)P) and 5-phosphate (PtdIns(5)P). In addition to its role in autophagy, acts as a regulator of lipid and glycogen homeostasis. May act as a tumor suppressor. The sequence is that of Protein associated with UVRAG as autophagy enhancer from Bos taurus (Bovine).